Here is a 286-residue protein sequence, read N- to C-terminus: Aldo-keto reductase MAP_4149 (286 aa).

Residue Y61 is the Proton donor of the active site. The NADPH site is built by L201, V203, V239, R241, S242, R247, and N251.

The protein belongs to the aldo/keto reductase family.

This Mycolicibacterium paratuberculosis (strain ATCC BAA-968 / K-10) (Mycobacterium paratuberculosis) protein is Aldo-keto reductase MAP_4149.